The following is a 157-amino-acid chain: 3-hydroxyacyl-[acyl-carrier-protein] dehydratase FabZ (157 aa).

H58 is an active-site residue.

This sequence belongs to the thioester dehydratase family. FabZ subfamily.

The protein resides in the cytoplasm. The catalysed reaction is a (3R)-hydroxyacyl-[ACP] = a (2E)-enoyl-[ACP] + H2O. In terms of biological role, involved in unsaturated fatty acids biosynthesis. Catalyzes the dehydration of short chain beta-hydroxyacyl-ACPs and long chain saturated and unsaturated beta-hydroxyacyl-ACPs. The chain is 3-hydroxyacyl-[acyl-carrier-protein] dehydratase FabZ from Brucella melitensis biotype 2 (strain ATCC 23457).